Consider the following 500-residue polypeptide: Protein nucleotidyltransferase YdiU (500 aa).

Residues G96, G98, R99, K119, D131, G132, R182, and R189 each contribute to the ATP site. Catalysis depends on D258, which acts as the Proton acceptor. Residues N259 and D268 each coordinate Mg(2+). D268 is an ATP binding site.

This sequence belongs to the SELO family. Requires Mg(2+) as cofactor. Mn(2+) serves as cofactor.

The enzyme catalyses L-seryl-[protein] + ATP = 3-O-(5'-adenylyl)-L-seryl-[protein] + diphosphate. It carries out the reaction L-threonyl-[protein] + ATP = 3-O-(5'-adenylyl)-L-threonyl-[protein] + diphosphate. The catalysed reaction is L-tyrosyl-[protein] + ATP = O-(5'-adenylyl)-L-tyrosyl-[protein] + diphosphate. It catalyses the reaction L-histidyl-[protein] + UTP = N(tele)-(5'-uridylyl)-L-histidyl-[protein] + diphosphate. The enzyme catalyses L-seryl-[protein] + UTP = O-(5'-uridylyl)-L-seryl-[protein] + diphosphate. It carries out the reaction L-tyrosyl-[protein] + UTP = O-(5'-uridylyl)-L-tyrosyl-[protein] + diphosphate. Its function is as follows. Nucleotidyltransferase involved in the post-translational modification of proteins. It can catalyze the addition of adenosine monophosphate (AMP) or uridine monophosphate (UMP) to a protein, resulting in modifications known as AMPylation and UMPylation. In Rhizobium leguminosarum bv. trifolii (strain WSM2304), this protein is Protein nucleotidyltransferase YdiU.